The sequence spans 537 residues: Chaperonin GroEL (537 aa).

Residues 29–32, 86–90, G413, 477–479, and D493 contribute to the ATP site; these read TLGP, DGTTT, and NAA.

This sequence belongs to the chaperonin (HSP60) family. As to quaternary structure, forms a cylinder of 14 subunits composed of two heptameric rings stacked back-to-back. Interacts with the co-chaperonin GroES.

It is found in the cytoplasm. The catalysed reaction is ATP + H2O + a folded polypeptide = ADP + phosphate + an unfolded polypeptide.. Functionally, together with its co-chaperonin GroES, plays an essential role in assisting protein folding. The GroEL-GroES system forms a nano-cage that allows encapsulation of the non-native substrate proteins and provides a physical environment optimized to promote and accelerate protein folding. The chain is Chaperonin GroEL from Lactobacillus delbrueckii subsp. bulgaricus (strain ATCC 11842 / DSM 20081 / BCRC 10696 / JCM 1002 / NBRC 13953 / NCIMB 11778 / NCTC 12712 / WDCM 00102 / Lb 14).